The primary structure comprises 142 residues: Large-conductance mechanosensitive channel (142 aa).

3 helical membrane-spanning segments follow: residues 14–34, 38–58, and 82–102; these read VMDL…VDSV, LVMP…NYFL, and GNFI…FLLI.

Belongs to the MscL family. In terms of assembly, homopentamer.

It localises to the cell inner membrane. Its function is as follows. Channel that opens in response to stretch forces in the membrane lipid bilayer. May participate in the regulation of osmotic pressure changes within the cell. The polypeptide is Large-conductance mechanosensitive channel (Rhizobium meliloti (strain 1021) (Ensifer meliloti)).